The sequence spans 159 residues: UPF0303 protein Ping_1243 (159 aa).

The protein belongs to the UPF0303 family.

This chain is UPF0303 protein Ping_1243, found in Psychromonas ingrahamii (strain DSM 17664 / CCUG 51855 / 37).